We begin with the raw amino-acid sequence, 660 residues long: Acetyl-coenzyme A synthetase (660 aa).

CoA-binding positions include 197–200 (RGGK) and threonine 317. ATP-binding positions include 397–399 (GEP), 421–426 (DTFWQT), aspartate 512, and arginine 528. Position 536 (serine 536) interacts with CoA. ATP is bound at residue arginine 539. Mg(2+) contacts are provided by valine 550 and valine 555. Lysine 625 is subject to N6-acetyllysine.

Belongs to the ATP-dependent AMP-binding enzyme family. The cofactor is Mg(2+). Post-translationally, acetylated. Deacetylation by the SIR2-homolog deacetylase activates the enzyme.

It catalyses the reaction acetate + ATP + CoA = acetyl-CoA + AMP + diphosphate. Catalyzes the conversion of acetate into acetyl-CoA (AcCoA), an essential intermediate at the junction of anabolic and catabolic pathways. AcsA undergoes a two-step reaction. In the first half reaction, AcsA combines acetate with ATP to form acetyl-adenylate (AcAMP) intermediate. In the second half reaction, it can then transfer the acetyl group from AcAMP to the sulfhydryl group of CoA, forming the product AcCoA. The protein is Acetyl-coenzyme A synthetase of Ralstonia nicotianae (strain ATCC BAA-1114 / GMI1000) (Ralstonia solanacearum).